The following is a 494-amino-acid chain: Aspartyl/glutamyl-tRNA(Asn/Gln) amidotransferase subunit B (494 aa).

This sequence belongs to the GatB/GatE family. GatB subfamily. Heterotrimer of A, B and C subunits.

The catalysed reaction is L-glutamyl-tRNA(Gln) + L-glutamine + ATP + H2O = L-glutaminyl-tRNA(Gln) + L-glutamate + ADP + phosphate + H(+). It catalyses the reaction L-aspartyl-tRNA(Asn) + L-glutamine + ATP + H2O = L-asparaginyl-tRNA(Asn) + L-glutamate + ADP + phosphate + 2 H(+). Allows the formation of correctly charged Asn-tRNA(Asn) or Gln-tRNA(Gln) through the transamidation of misacylated Asp-tRNA(Asn) or Glu-tRNA(Gln) in organisms which lack either or both of asparaginyl-tRNA or glutaminyl-tRNA synthetases. The reaction takes place in the presence of glutamine and ATP through an activated phospho-Asp-tRNA(Asn) or phospho-Glu-tRNA(Gln). This Synechococcus sp. (strain ATCC 27144 / PCC 6301 / SAUG 1402/1) (Anacystis nidulans) protein is Aspartyl/glutamyl-tRNA(Asn/Gln) amidotransferase subunit B.